The following is a 202-amino-acid chain: dITP/XTP pyrophosphatase (202 aa).

8–13 lines the substrate pocket; that stretch reads TKNMGK. Mg(2+)-binding residues include Glu41 and Asp70. The active-site Proton acceptor is the Asp70. Residues Ser71, 155-158, Lys178, and 183-184 contribute to the substrate site; these read FGYD and HR.

Belongs to the HAM1 NTPase family. Homodimer. Mg(2+) serves as cofactor.

It catalyses the reaction XTP + H2O = XMP + diphosphate + H(+). The catalysed reaction is dITP + H2O = dIMP + diphosphate + H(+). It carries out the reaction ITP + H2O = IMP + diphosphate + H(+). In terms of biological role, pyrophosphatase that catalyzes the hydrolysis of nucleoside triphosphates to their monophosphate derivatives, with a high preference for the non-canonical purine nucleotides XTP (xanthosine triphosphate), dITP (deoxyinosine triphosphate) and ITP. Seems to function as a house-cleaning enzyme that removes non-canonical purine nucleotides from the nucleotide pool, thus preventing their incorporation into DNA/RNA and avoiding chromosomal lesions. In Bacillus anthracis, this protein is dITP/XTP pyrophosphatase.